Here is a 499-residue protein sequence, read N- to C-terminus: MSNSNDNIWNNTEELNELLRIRREKLNILRSMGIEPYGIDRFERTNVSSDIKNDYENFEGKVVTLAGRIMSKRAHGKASFADIQDRDGRIQIYVKYDTVGEKNYEIFKILDIGDIIGVTGEVFKSKTGEITIRVTDFKLLSKSLQILPEKWHGLKDPDLRYRQRYTDLIINPEVKEVFLKRTKIIKAIREFLDNRGFLEVETPILHTIAGGAAARPFITHHNALDIDMYLRIALELHLKRLIVGGLEKVYEMGRVFRNEGMDIRHNPEFTLLELYEAYTDYYGMMELTEQLFAYVAQKVNGTTKIVYQGTEIDLTPPWKRITMVDAIKEYVGVDFNEVKADAEAVEIAKRLNLETKEGMKKGEVIALVFDELVEQHLIQPTFVMDYPVEISPLAKRKHDNPAFTSRFEAFIYGREVANAFSELNDPIDQKERFLEQLKQREAGDEEAHMMDEDFINALEVGMPPTGGLGIGVDRLVMFMTDAYSIRDVILFPTMKPKND.

Mg(2+)-binding residues include E408 and E415.

Belongs to the class-II aminoacyl-tRNA synthetase family. Homodimer. Mg(2+) serves as cofactor.

It localises to the cytoplasm. The enzyme catalyses tRNA(Lys) + L-lysine + ATP = L-lysyl-tRNA(Lys) + AMP + diphosphate. This Thermoanaerobacter sp. (strain X514) protein is Lysine--tRNA ligase.